Consider the following 81-residue polypeptide: Defensin-like protein 43 (81 aa).

The first 27 residues, 1-27, serve as a signal peptide directing secretion; it reads MGITKTSVTFLFLLILAAFVSNYNVLA. 4 disulfide bridges follow: cysteine 40–cysteine 79, cysteine 44–cysteine 67, cysteine 53–cysteine 77, and cysteine 57–cysteine 78.

This sequence belongs to the DEFL family.

It localises to the secreted. In Arabidopsis thaliana (Mouse-ear cress), this protein is Defensin-like protein 43.